We begin with the raw amino-acid sequence, 697 residues long: Glycine--tRNA ligase beta subunit (697 aa).

Belongs to the class-II aminoacyl-tRNA synthetase family. In terms of assembly, tetramer of two alpha and two beta subunits.

It localises to the cytoplasm. The catalysed reaction is tRNA(Gly) + glycine + ATP = glycyl-tRNA(Gly) + AMP + diphosphate. The chain is Glycine--tRNA ligase beta subunit from Cereibacter sphaeroides (strain ATCC 17029 / ATH 2.4.9) (Rhodobacter sphaeroides).